Here is a 215-residue protein sequence, read N- to C-terminus: Nascent polypeptide-associated complex subunit alpha (215 aa).

The tract at residues 1–81 (MPGEATETVP…SEKKARKAMS (81 aa)) is disordered. Residues 9 to 28 (VPATEQELPQPQAETGSGTE) show a composition bias toward polar residues. Acidic residues predominate over residues 29 to 42 (SDSDESVPELEEQD). Ser-43 is subject to Phosphoserine; by ILK1. Residues 44–57 (TQATTQQAQLAAAA) show a composition bias toward low complexity. The required for DNA-binding stretch occupies residues 69–80 (QSRSEKKARKAM). One can recognise an NAC-A/B domain in the interval 70–135 (SRSEKKARKA…AKIEDLSQQA (66 aa)). Residues 93-108 (RVTIRKSKNILFVITK) are RNA/DNA-binding. Ser-132 carries the phosphoserine modification. Residue Lys-142 is modified to N6-acetyllysine; alternate. Lys-142 is covalently cross-linked (Glycyl lysine isopeptide (Lys-Gly) (interchain with G-Cter in SUMO2); alternate). Residue Thr-159 is modified to Phosphothreonine; by GSK3-beta. Thr-161 carries the post-translational modification Phosphothreonine. 4 positions are modified to phosphoserine: Ser-166, Ser-186, Ser-191, and Ser-203. Residues 176–213 (VEVKDIELVMSQANVSRAKAVRALKNNSNDIVNAIMEL) form the UBA domain.

The protein belongs to the NAC-alpha family. As to quaternary structure, interacts with TBP and JUN. Part of the nascent polypeptide-associated complex (NAC), which is a heterodimer of NACA and BTF3 (via NAC-A/B domains). NAC associates with ribosomes through the BTF3/NACB subunit and contacts the ribosomal protein L23, which is positioned near the exiting site. Both subunits can contact nascent polypeptide chains. NACA may also form homodimers, and only this form binds DNA. Post-translationally, phosphorylation of Thr-159 by GSK3B may promote proteasome mediated degradation. Phosphorylation of Ser-43 by ILK during cell adhesion may promote nuclear localization. As to expression, ubiquitously expressed.

Its subcellular location is the cytoplasm. The protein resides in the nucleus. Functionally, prevents inappropriate targeting of non-secretory polypeptides to the endoplasmic reticulum (ER). Binds to nascent polypeptide chains as they emerge from the ribosome and blocks their interaction with the signal recognition particle (SRP), which normally targets nascent secretory peptides to the ER. Also reduces the inherent affinity of ribosomes for protein translocation sites in the ER membrane (M sites). May act as a specific coactivator for JUN, binding to DNA and stabilizing the interaction of JUN homodimers with target gene promoters. The chain is Nascent polypeptide-associated complex subunit alpha (NACA) from Homo sapiens (Human).